The sequence spans 975 residues: Kinesin heavy chain (975 aa).

The 322-residue stretch at 12–333 (SIKVVCRFRP…LDFGRRAKTV (322 aa)) folds into the Kinesin motor domain. Residue 92 to 99 (GQTSSGKT) coordinates ATP. Residues 180–321 (VSSPEDVFEV…PASFNESETK (142 aa)) form a microtubule-binding region. The stretch at 335-931 (NVVCVNEELT…DRIKEAVRQK (597 aa)) forms a coiled coil. A necessary for associating with milt region spans residues 810–891 (VAKELQTLHN…LPKLEKRLRC (82 aa)). Residues 932-975 (HLGRRGPQAQIAKPIRSGQGAIAIRGGGAVGGPSPLAQVNPVNS) are globular.

It belongs to the TRAFAC class myosin-kinesin ATPase superfamily. Kinesin family. Kinesin subfamily. As to quaternary structure, oligomer composed of two heavy chains and two light chains.

The protein resides in the cytoplasm. It localises to the cytoskeleton. In terms of biological role, kinesin is a microtubule-associated force-producing protein that may play a role in organelle transport. Milt and Miro form an essential protein complex that links Khc to mitochondria for light chain-independent, anterograde transport of mitochondria. The protein is Kinesin heavy chain (Khc) of Drosophila melanogaster (Fruit fly).